A 208-amino-acid polypeptide reads, in one-letter code: N-(5'-phosphoribosyl)anthranilate isomerase (208 aa).

This sequence belongs to the TrpF family.

It carries out the reaction N-(5-phospho-beta-D-ribosyl)anthranilate = 1-(2-carboxyphenylamino)-1-deoxy-D-ribulose 5-phosphate. It participates in amino-acid biosynthesis; L-tryptophan biosynthesis; L-tryptophan from chorismate: step 3/5. This chain is N-(5'-phosphoribosyl)anthranilate isomerase, found in Methanococcus maripaludis (strain C7 / ATCC BAA-1331).